A 347-amino-acid chain; its full sequence is Bifunctional methylenetetrahydrofolate dehydrogenase/cyclohydrolase 2, mitochondrial (347 aa).

Substrate contacts are provided by residues 98–102 (YVRNK) and 145–147 (VQL). NAD(+) is bound by residues 214–216 (GRS) and Arg247. Substrate is bound at residue 323–327 (PGGVG).

It belongs to the tetrahydrofolate dehydrogenase/cyclohydrolase family. Requires Mg(2+) as cofactor.

The protein localises to the mitochondrion inner membrane. The catalysed reaction is (6R)-5,10-methylene-5,6,7,8-tetrahydrofolate + NAD(+) = (6R)-5,10-methenyltetrahydrofolate + NADH. The enzyme catalyses (6R)-5,10-methenyltetrahydrofolate + H2O = (6R)-10-formyltetrahydrofolate + H(+). It catalyses the reaction (6R)-5,10-methylene-5,6,7,8-tetrahydrofolate + NADP(+) = (6R)-5,10-methenyltetrahydrofolate + NADPH. It participates in one-carbon metabolism; tetrahydrofolate interconversion. Its function is as follows. Bifunctional mitochondrial folate-interconverting enzyme that has both NAD/NADP-dependent methylenetetrahydrofolate dehydrogenase and methenyltetrahydrofolate cyclohydrolase activities. This is Bifunctional methylenetetrahydrofolate dehydrogenase/cyclohydrolase 2, mitochondrial from Callithrix jacchus (White-tufted-ear marmoset).